We begin with the raw amino-acid sequence, 256 residues long: UPF0246 protein HRM2_41860 (256 aa).

Belongs to the UPF0246 family.

The sequence is that of UPF0246 protein HRM2_41860 from Desulforapulum autotrophicum (strain ATCC 43914 / DSM 3382 / VKM B-1955 / HRM2) (Desulfobacterium autotrophicum).